The chain runs to 259 residues: O-antigen export system permease protein RfbA (259 aa).

Helical transmembrane passes span 33–53 (LGYL…YFIF), 73–95 (FPWQ…NAQI), 111–131 (VMME…FLFV), 142–162 (WGIP…SIIF), 176–196 (VSLG…SDMI), and 228–248 (EYIS…LSIF). Residues 33-251 (LGYLWSVANP…VVGLSIFNKL (219 aa)) enclose the ABC transmembrane type-2 domain.

The protein belongs to the ABC-2 integral membrane protein family.

The protein resides in the cell inner membrane. Functionally, may form an ATP-driven O-antigen export apparatus, in association with RfbB. This Klebsiella pneumoniae protein is O-antigen export system permease protein RfbA (rfbA).